The following is a 1251-amino-acid chain: Phospholipid-transporting ATPase IC (1251 aa).

Residues 1–52 are disordered; that stretch reads MSTERDSETTFDEESQPNDEVVPYSDDETEDELEDQGSTVEPEQNRVNREAE. Residues 1-121 lie on the Cytoplasmic side of the membrane; that stretch reads MSTERDSETT…LFEQFKRAAN (121 aa). Positions 25-35 are enriched in acidic residues; it reads SDDETEDELED. The span at 43-52 shows a compositional bias: basic and acidic residues; sequence EQNRVNREAE. The helical transmembrane segment at 122-142 threads the bilayer; it reads FYFLILLILQAIPQISTLAWY. At 143 to 144 the chain is on the exoplasmic loop side; it reads TT. The helical transmembrane segment at 145–165 threads the bilayer; the sequence is LVPLLLVLGITAIKDLVDDVA. Residues 166–339 are Cytoplasmic-facing; it reads RHKMDKEINN…RTKIDYLMNY (174 aa). Residues 340–360 traverse the membrane as a helical segment; that stretch reads MVYTIFIVLILVSAGLAIGHA. At 361–385 the chain is on the exoplasmic loop side; sequence YWEAQVGNYSWYLYDGENATPSYRG. The chain crosses the membrane as a helical span at residues 386-406; the sequence is FLNFWGYIIVLNTMVPISLYV. The Cytoplasmic portion of the chain corresponds to 407-952; the sequence is SVEVIRLGQS…SYIRMCKFLR (546 aa). Asp-454 functions as the 4-aspartylphosphate intermediate in the catalytic mechanism. ATP contacts are provided by Asp-454, Lys-455, Thr-456, Glu-555, Phe-596, Lys-619, Arg-652, Thr-732, Gly-733, Asp-734, Arg-867, and Lys-873. Mg(2+) is bound at residue Asp-454. Residue Thr-456 coordinates Mg(2+). Residue Asp-893 coordinates Mg(2+). ATP-binding residues include Asn-896 and Asp-897. Asp-897 is a binding site for Mg(2+). A helical transmembrane segment spans residues 953–973; the sequence is YFFYKNFAFTLVHFWYSFFNG. Over 974–982 the chain is Exoplasmic loop; it reads YSAQTAYED. Residues 983 to 1003 traverse the membrane as a helical segment; it reads WFITLYNVLYSSLPVLLMGLL. The Cytoplasmic portion of the chain corresponds to 1004 to 1032; the sequence is DQDVSDKLSLRFPGLYVVGQRDLLFNYKR. A helical transmembrane segment spans residues 1033–1053; sequence FFVSLLHGVLTSMVLFFIPLG. The Exoplasmic loop segment spans residues 1054–1071; that stretch reads AYLQTVGQDGEAPSDYQS. A helical membrane pass occupies residues 1072 to 1092; sequence FAVTVASALVITVNFQIGLDT. At 1093 to 1094 the chain is on the cytoplasmic side; that stretch reads SY. The chain crosses the membrane as a helical span at residues 1095–1115; it reads WTFVNAFSIFGSIALYFGIMF. At 1116–1142 the chain is on the exoplasmic loop side; the sequence is DFHSAGIHVLFPSAFQFTGTASNALRQ. The chain crosses the membrane as a helical span at residues 1143–1163; the sequence is PYIWLTIILTVAVCLLPVVAI. Residues 1164–1251 are Cytoplasmic-facing; sequence RFLSMTIWPS…TAEYRRTVES (88 aa). Position 1223 is a phosphoserine (Ser-1223).

The protein belongs to the cation transport ATPase (P-type) (TC 3.A.3) family. Type IV subfamily. As to quaternary structure, component of a P4-ATPase flippase complex which consists of a catalytic alpha subunit ATP8B1 and an accessory beta subunit TMEM30A. The flippase ATP8B1:TMEM30A complex can form an intermediate phosphoenzyme in vitro. Also interacts with beta subunit TMEM30B. Mg(2+) is required as a cofactor. Hepatocytes, bile duct, intestinal epithelial cells (cholangiocytes and ileocytes), and pancreatic acinar cells.

It is found in the cell membrane. The protein resides in the apical cell membrane. It localises to the cell projection. The protein localises to the stereocilium. Its subcellular location is the endoplasmic reticulum. It is found in the golgi apparatus. It catalyses the reaction ATP + H2O + phospholipidSide 1 = ADP + phosphate + phospholipidSide 2.. It carries out the reaction a 1,2-diacyl-sn-glycero-3-phosphocholine(out) + ATP + H2O = a 1,2-diacyl-sn-glycero-3-phosphocholine(in) + ADP + phosphate + H(+). The enzyme catalyses a 1,2-diacyl-sn-glycero-3-phospho-L-serine(out) + ATP + H2O = a 1,2-diacyl-sn-glycero-3-phospho-L-serine(in) + ADP + phosphate + H(+). In terms of biological role, catalytic component of a P4-ATPase flippase complex which catalyzes the hydrolysis of ATP coupled to the transport of phospholipids, in particular phosphatidylcholines (PC), from the outer to the inner leaflet of the plasma membrane. May participate in the establishment of the canalicular membrane integrity by ensuring asymmetric distribution of phospholipids in the canicular membrane. Thus may have a role in the regulation of bile acids transport into the canaliculus, uptake of bile acids from intestinal contents into intestinal mucosa or both and protect hepatocytes from bile salts. Involved in the microvillus formation in polarized epithelial cells; the function seems to be independent from its flippase activity. Participates in correct apical membrane localization of CDC42, CFTR and SLC10A2. Enables CDC42 clustering at the apical membrane during enterocyte polarization through the interaction between CDC42 polybasic region and negatively charged membrane lipids provided by ATP8B1. Together with TMEM30A is involved in uptake of the synthetic drug alkylphospholipid perifosine. Required for the preservation of cochlear hair cells in the inner ear. According PubMed:20852622 is proposed to act as cardiolipin transporter during inflammatory injury; the function is questioned by PubMed:21475228. This is Phospholipid-transporting ATPase IC from Mus musculus (Mouse).